Here is a 328-residue protein sequence, read N- to C-terminus: Surface antigen CRP170 (328 aa).

Repeats lie at residues 38 to 102 (NAPC…CKKC) and 103 to 167 (NAPC…CKKC).

The chain is Surface antigen CRP170 from Giardia intestinalis (Giardia lamblia).